The sequence spans 570 residues: Arginine--tRNA ligase (570 aa).

The short motif at 127–137 (ANPTGPLHLGH) is the 'HIGH' region element.

This sequence belongs to the class-I aminoacyl-tRNA synthetase family. In terms of assembly, monomer.

It localises to the cytoplasm. The enzyme catalyses tRNA(Arg) + L-arginine + ATP = L-arginyl-tRNA(Arg) + AMP + diphosphate. The polypeptide is Arginine--tRNA ligase (Neorickettsia sennetsu (strain ATCC VR-367 / Miyayama) (Ehrlichia sennetsu)).